Here is a 188-residue protein sequence, read N- to C-terminus: Photosystem I assembly protein Ycf4 (188 aa).

The next 2 membrane-spanning stretches (helical) occupy residues 26–48 (MLWA…SSYF) and 68–90 (AALT…VFFL).

It belongs to the Ycf4 family.

It localises to the cellular thylakoid membrane. Seems to be required for the assembly of the photosystem I complex. This is Photosystem I assembly protein Ycf4 from Picosynechococcus sp. (strain ATCC 27264 / PCC 7002 / PR-6) (Agmenellum quadruplicatum).